Reading from the N-terminus, the 314-residue chain is Dual specificity protein phosphatase 2 (314 aa).

Residues 23–144 (EAERTLLLDC…FQGCCPDLCS (122 aa)) enclose the Rhodanese domain. The Tyrosine-protein phosphatase domain maps to 172–313 (GPVEILPYLF…LLQFETQVLC (142 aa)). The active-site Phosphocysteine intermediate is the cysteine 257.

It belongs to the protein-tyrosine phosphatase family. Non-receptor class dual specificity subfamily. Interacts with MAPK14; this interaction does not lead to catalytic activation of DUSP2 and dephosphrylation of MAPK14. As to expression, expressed in hematopoietic tissues.

It localises to the nucleus. The catalysed reaction is O-phospho-L-tyrosyl-[protein] + H2O = L-tyrosyl-[protein] + phosphate. It catalyses the reaction O-phospho-L-threonyl-[protein] + H2O = L-threonyl-[protein] + phosphate. Dephosphorylates both phosphorylated Thr and Tyr residues in MAPK1, and dephosphorylation of phosphotyrosine is slightly faster than that of phosphothreonine. Can dephosphorylate MAPK1. This chain is Dual specificity protein phosphatase 2, found in Homo sapiens (Human).